Reading from the N-terminus, the 413-residue chain is Glucose-1-phosphatase (413 aa).

The first 22 residues, 1 to 22, serve as a signal peptide directing secretion; it reads MKKSLLAVAVAGAVLLSSAVQA. Residue R39 coordinates substrate. H40 serves as the catalytic Nucleophile. Residues R43, R116, and E218 each contribute to the substrate site. The active-site Proton donor is D312.

This sequence belongs to the histidine acid phosphatase family. Homodimer.

It is found in the periplasm. It carries out the reaction alpha-D-glucose 1-phosphate + H2O = D-glucose + phosphate. This chain is Glucose-1-phosphatase (agp), found in Salmonella typhimurium (strain LT2 / SGSC1412 / ATCC 700720).